A 102-amino-acid polypeptide reads, in one-letter code: Guanyl-specific ribonuclease Pc (102 aa).

2 disulfide bridges follow: cysteine 2-cysteine 10 and cysteine 6-cysteine 101. Residue histidine 38 is part of the active site. Glutamate 56 functions as the Proton acceptor in the catalytic mechanism. Histidine 90 acts as the Proton donor in catalysis.

The protein belongs to the ribonuclease N1/T1 family.

It carries out the reaction [RNA] containing guanosine + H2O = an [RNA fragment]-3'-guanosine-3'-phosphate + a 5'-hydroxy-ribonucleotide-3'-[RNA fragment].. This chain is Guanyl-specific ribonuclease Pc, found in Penicillium chrysogenum (Penicillium notatum).